The sequence spans 244 residues: Sperm-egg fusion protein Juno (244 aa).

The signal sequence occupies residues methionine 1–alanine 19. Intrachain disulfides connect cysteine 27-cysteine 55, cysteine 47-cysteine 95, cysteine 56-cysteine 99, cysteine 79-cysteine 166, cysteine 86-cysteine 137, cysteine 126-cysteine 200, cysteine 130-cysteine 180, and cysteine 143-cysteine 160. An important for interaction with IZUMO1 region spans residues tryptophan 62–leucine 81. An N-linked (GlcNAc...) asparagine glycan is attached at asparagine 73. Asparagine 185 carries N-linked (GlcNAc...) asparagine glycosylation. Glycine 222 carries GPI-anchor amidated glycine lipidation. A propeptide spanning residues serine 223 to proline 244 is cleaved from the precursor.

The protein belongs to the folate receptor family. In terms of assembly, monomer. Interacts with IZUMO1; the interaction is direct. IZUMO1 and IZUMO1R/JUNO form a complex with 1:1 stoichiometry. Interacts with WDR54. The protein is rapidly cleaved following fertilization, being only weakly detectable in zona-intact fertilized eggs at telophase II and undetectable at the pronuclear stage. Sheding is probably required to block to polyspermy and ensuring egg fusion with a single sperm. Widely expressed with higher expression in thymus, spleen and lung. Present at the cell surface of unfertilized oocytes, while it is barely detectable 30 to 40 minutes after fertilization (at protein level).

Its subcellular location is the cell membrane. In terms of biological role, receptor for IZUMO1 present at the cell surface of oocytes (oolemma), which is essential for species-specific gamete recognition and fertilization. The IZUMO1:IZUMO1R/JUNO interaction is a necessary adhesion event between sperm and egg that is required for fertilization but is not sufficient for cell fusion. The ligand-receptor interaction probably does not act as a membrane 'fusogen'. Does not bind folate. The polypeptide is Sperm-egg fusion protein Juno (Mus musculus (Mouse)).